A 217-amino-acid polypeptide reads, in one-letter code: MRLRKKWWARPEIEASDKFADEPKELRGKWNKEFNNNNDIHLELGCGRGGFISQLVEKNKDINYVGIDLKDEVIVYAIRKVKEKEEEVKREFKNIKFVTMNIMGIAEVFDKNEISKIYINFCNPWPKERHNKRRLTHTKLLTEYKKFLKPNTEIWFKTDDKELFEDSQEYFKESGFNIEYITYDLHNSDFKENIKTEYETKFETMGMKIMFLKARLL.

Residues Glu-43, Asp-68, Asn-101, and Asn-123 each coordinate S-adenosyl-L-methionine. Lys-127 contributes to the substrate binding site. The interval 129–134 (RHNKRR) is interaction with RNA. Substrate is bound by residues Asp-159 and 196-199 (TEYE).

The protein belongs to the class I-like SAM-binding methyltransferase superfamily. TrmB family.

The catalysed reaction is guanosine(46) in tRNA + S-adenosyl-L-methionine = N(7)-methylguanosine(46) in tRNA + S-adenosyl-L-homocysteine. It functions in the pathway tRNA modification; N(7)-methylguanine-tRNA biosynthesis. Catalyzes the formation of N(7)-methylguanine at position 46 (m7G46) in tRNA. This is tRNA (guanine-N(7)-)-methyltransferase from Clostridium botulinum (strain Loch Maree / Type A3).